The sequence spans 361 residues: Protein RecA (361 aa).

77-84 (GPESSGKT) is a binding site for ATP.

Belongs to the RecA family.

The protein localises to the cytoplasm. Functionally, can catalyze the hydrolysis of ATP in the presence of single-stranded DNA, the ATP-dependent uptake of single-stranded DNA by duplex DNA, and the ATP-dependent hybridization of homologous single-stranded DNAs. It interacts with LexA causing its activation and leading to its autocatalytic cleavage. The protein is Protein RecA of Sinorhizobium fredii (strain NBRC 101917 / NGR234).